The following is a 764-amino-acid chain: Molybdenum cofactor sulfurase 3 (764 aa).

At K228 the chain carries N6-(pyridoxal phosphate)lysine. C394 is a catalytic residue. Positions 607–762 constitute an MOSC domain; the sequence is LRLLKQSDEE…LYCNSVVEGL (156 aa).

It belongs to the class-V pyridoxal-phosphate-dependent aminotransferase family. MOCOS subfamily. Requires pyridoxal 5'-phosphate as cofactor.

The catalysed reaction is Mo-molybdopterin + L-cysteine + AH2 = thio-Mo-molybdopterin + L-alanine + A + H2O. Its function is as follows. Sulfurates the molybdenum cofactor. Sulfation of molybdenum is essential for xanthine dehydrogenase (XDH) and aldehyde oxidase (ADO) enzymes in which molybdenum cofactor is liganded by 1 oxygen and 1 sulfur atom in active form. The sequence is that of Molybdenum cofactor sulfurase 3 from Aedes aegypti (Yellowfever mosquito).